The primary structure comprises 64 residues: MTLLSSISKIGTIKNGNSLNEITSTISNNEAKGSPSFSGNQSTKSIGDLLLQIAIITKATTKNK.

This Dictyostelium discoideum (Social amoeba) protein is Protein sigN173.